Consider the following 67-residue polypeptide: MKSYKVNLELFDKAVHREYRIIQRFFDMGEAEEFKTRFKDIRDKIQSDTATKDELLEVAEVIKRNMN.

This is an uncharacterized protein from Enterobacteria phage T4 (Bacteriophage T4).